The following is a 364-amino-acid chain: Coproporphyrin III ferrochelatase (364 aa).

Fe-coproporphyrin III is bound by residues R29 and Y118. The Fe(2+) site is built by H169 and E250.

It belongs to the ferrochelatase family.

The protein localises to the cytoplasm. It carries out the reaction Fe-coproporphyrin III + 2 H(+) = coproporphyrin III + Fe(2+). The protein operates within porphyrin-containing compound metabolism; protoheme biosynthesis. Its function is as follows. Involved in coproporphyrin-dependent heme b biosynthesis. Catalyzes the insertion of ferrous iron into coproporphyrin III to form Fe-coproporphyrin III. The protein is Coproporphyrin III ferrochelatase of Streptococcus pneumoniae (strain ATCC 700669 / Spain 23F-1).